A 320-amino-acid polypeptide reads, in one-letter code: MQTRNTFSWIREEITRSISVSLIIYIITWASISSAYPIFAQQNYENPREATGRIVCANCHLANKPVDIEVPQTVLPDTVFEAVVKIPYDMQLKQVLANGKKGALNVGAVLILPEGFELAPPDRISPEMKEKIGNLSFQNYRPNKKNILVIGPVPGQKYSEITFPILAPDPATNKDVHFLKYPIYVGGNRGRGQIYPDGSKSNNTVYNATAGGIISKILRKEKGGYEITIVDASNGREVIDIIPRGLELLVSEGESIKLDQPLTSNPNVGGFGQGDAEIVLQDPLRVQGLLFFLGSVVLAQIFLVLKKKQFEKVQLSEMNF.

A signal peptide spans 1 to 35 (MQTRNTFSWIREEITRSISVSLIIYIITWASISSA). Heme-binding residues include tyrosine 36, cysteine 56, cysteine 59, and histidine 60. Residues 286-305 (VQGLLFFLGSVVLAQIFLVL) traverse the membrane as a helical segment.

This sequence belongs to the cytochrome f family. In terms of assembly, the 4 large subunits of the cytochrome b6-f complex are cytochrome b6, subunit IV (17 kDa polypeptide, petD), cytochrome f and the Rieske protein, while the 4 small subunits are PetG, PetL, PetM and PetN. The complex functions as a dimer. It depends on heme as a cofactor.

Its subcellular location is the plastid. It localises to the chloroplast thylakoid membrane. In terms of biological role, component of the cytochrome b6-f complex, which mediates electron transfer between photosystem II (PSII) and photosystem I (PSI), cyclic electron flow around PSI, and state transitions. The protein is Cytochrome f (petA) of Arabidopsis thaliana (Mouse-ear cress).